The sequence spans 118 residues: Large ribosomal subunit protein bL19 (118 aa).

It belongs to the bacterial ribosomal protein bL19 family.

Functionally, this protein is located at the 30S-50S ribosomal subunit interface and may play a role in the structure and function of the aminoacyl-tRNA binding site. The chain is Large ribosomal subunit protein bL19 from Nautilia profundicola (strain ATCC BAA-1463 / DSM 18972 / AmH).